Here is a 174-residue protein sequence, read N- to C-terminus: ATP synthase subunit b (174 aa).

The helical transmembrane segment at 18–38 (IIVVSGSFLILMFLLKHFAWG) threads the bilayer.

Belongs to the ATPase B chain family. F-type ATPases have 2 components, F(1) - the catalytic core - and F(0) - the membrane proton channel. F(1) has five subunits: alpha(3), beta(3), gamma(1), delta(1), epsilon(1). F(0) has three main subunits: a(1), b(2) and c(10-14). The alpha and beta chains form an alternating ring which encloses part of the gamma chain. F(1) is attached to F(0) by a central stalk formed by the gamma and epsilon chains, while a peripheral stalk is formed by the delta and b chains.

It localises to the cell membrane. In terms of biological role, f(1)F(0) ATP synthase produces ATP from ADP in the presence of a proton or sodium gradient. F-type ATPases consist of two structural domains, F(1) containing the extramembraneous catalytic core and F(0) containing the membrane proton channel, linked together by a central stalk and a peripheral stalk. During catalysis, ATP synthesis in the catalytic domain of F(1) is coupled via a rotary mechanism of the central stalk subunits to proton translocation. Functionally, component of the F(0) channel, it forms part of the peripheral stalk, linking F(1) to F(0). The polypeptide is ATP synthase subunit b (Enterococcus hirae (strain ATCC 9790 / DSM 20160 / JCM 8729 / LMG 6399 / NBRC 3181 / NCIMB 6459 / NCDO 1258 / NCTC 12367 / WDCM 00089 / R)).